The primary structure comprises 402 residues: Argininosuccinate synthase (402 aa).

9–17 (AYSGGLDTS) is an ATP binding site. Tyr-86 serves as a coordination point for L-citrulline. Gly-116 is an ATP binding site. Residues Thr-118, Asn-122, and Asp-123 each contribute to the L-aspartate site. Asn-122 serves as a coordination point for L-citrulline. The L-citrulline site is built by Arg-126, Ser-174, Ser-183, Glu-259, and Tyr-271.

The protein belongs to the argininosuccinate synthase family. Type 1 subfamily. In terms of assembly, homotetramer.

Its subcellular location is the cytoplasm. It catalyses the reaction L-citrulline + L-aspartate + ATP = 2-(N(omega)-L-arginino)succinate + AMP + diphosphate + H(+). It participates in amino-acid biosynthesis; L-arginine biosynthesis; L-arginine from L-ornithine and carbamoyl phosphate: step 2/3. The chain is Argininosuccinate synthase from Geobacillus sp. (strain WCH70).